A 383-amino-acid chain; its full sequence is Succinyl-diaminopimelate desuccinylase (383 aa).

His-68 lines the Zn(2+) pocket. Asp-70 is a catalytic residue. Asp-100 provides a ligand contact to Zn(2+). The active-site Proton acceptor is the Glu-130. Zn(2+) is bound by residues Glu-131, Glu-159, and His-352.

The protein belongs to the peptidase M20A family. DapE subfamily. Homodimer. Requires Zn(2+) as cofactor. Co(2+) is required as a cofactor.

It catalyses the reaction N-succinyl-(2S,6S)-2,6-diaminopimelate + H2O = (2S,6S)-2,6-diaminopimelate + succinate. The protein operates within amino-acid biosynthesis; L-lysine biosynthesis via DAP pathway; LL-2,6-diaminopimelate from (S)-tetrahydrodipicolinate (succinylase route): step 3/3. Catalyzes the hydrolysis of N-succinyl-L,L-diaminopimelic acid (SDAP), forming succinate and LL-2,6-diaminopimelate (DAP), an intermediate involved in the bacterial biosynthesis of lysine and meso-diaminopimelic acid, an essential component of bacterial cell walls. This is Succinyl-diaminopimelate desuccinylase from Granulibacter bethesdensis (strain ATCC BAA-1260 / CGDNIH1).